A 226-amino-acid polypeptide reads, in one-letter code: Peroxiredoxin-like 2C (226 aa).

This sequence belongs to the peroxiredoxin-like PRXL2 family. PRXL2C subfamily.

The chain is Peroxiredoxin-like 2C (prxl2c) from Takifugu rubripes (Japanese pufferfish).